A 353-amino-acid polypeptide reads, in one-letter code: MARIIALDGAQGEGGGQILRSALSLSMITGQPFEMSGIRAGRAKPGLLRQHLTAVRAATEICGAQVNGDELGSQQLRFTPGPIRGGEYRFAIGSAGSCMLVLQTVLPALWFADGSSRVEVHGGTHNQAAPSADFICRVWEPLLARMGISQRTTLIKHGFYPAGGGAAATVVEPATSLRGLTLISRGETLRTTAEALLAAVPYHVGEREVATLEAHFPQAEKNVVALEAHFPQAEKNVVALEGGCGPGNALSLMIQSEQLTELFAAFGVKGTSAEAVANQVAHEARRYLASPAAVGEHLADQLILPLALAGEGAFTVARASAHLLTNIVVVERFLPVRFSCEATESGYLVRVSD.

Residues glutamine 103 and 297 to 301 (HLADQ) contribute to the ATP site. Residue histidine 322 is the Tele-AMP-histidine intermediate of the active site.

It belongs to the RNA 3'-terminal cyclase family. Type 1 subfamily.

The protein localises to the cytoplasm. It catalyses the reaction a 3'-end 3'-phospho-ribonucleotide-RNA + ATP = a 3'-end 2',3'-cyclophospho-ribonucleotide-RNA + AMP + diphosphate. Catalyzes the conversion of 3'-phosphate to a 2',3'-cyclic phosphodiester at the end of RNA. The mechanism of action of the enzyme occurs in 3 steps: (A) adenylation of the enzyme by ATP; (B) transfer of adenylate to an RNA-N3'P to produce RNA-N3'PP5'A; (C) and attack of the adjacent 2'-hydroxyl on the 3'-phosphorus in the diester linkage to produce the cyclic end product. The biological role of this enzyme is unknown but it is likely to function in some aspects of cellular RNA processing. The protein is RNA 3'-terminal phosphate cyclase of Salmonella heidelberg (strain SL476).